We begin with the raw amino-acid sequence, 397 residues long: Argininosuccinate synthase (397 aa).

8–16 (AYSGGLDTS) serves as a coordination point for ATP. The L-citrulline site is built by Tyr-86 and Ser-91. Gly-116 serves as a coordination point for ATP. Residues Thr-118, Asn-122, and Asp-123 each coordinate L-aspartate. An L-citrulline-binding site is contributed by Asn-122. The L-citrulline site is built by Arg-126, Ser-175, Ser-184, Glu-260, and Tyr-272.

The protein belongs to the argininosuccinate synthase family. Type 1 subfamily. In terms of assembly, homotetramer.

It localises to the cytoplasm. The enzyme catalyses L-citrulline + L-aspartate + ATP = 2-(N(omega)-L-arginino)succinate + AMP + diphosphate + H(+). The protein operates within amino-acid biosynthesis; L-arginine biosynthesis; L-arginine from L-ornithine and carbamoyl phosphate: step 2/3. The polypeptide is Argininosuccinate synthase (Clostridium botulinum (strain 657 / Type Ba4)).